The primary structure comprises 295 residues: Ethanolamine ammonia-lyase small subunit (295 aa).

V207, E228, and C258 together coordinate adenosylcob(III)alamin.

The protein belongs to the EutC family. As to quaternary structure, the basic unit is a heterodimer which dimerizes to form tetramers. The heterotetramers trimerize; 6 large subunits form a core ring with 6 small subunits projecting outwards. The cofactor is adenosylcob(III)alamin.

The protein localises to the bacterial microcompartment. The catalysed reaction is ethanolamine = acetaldehyde + NH4(+). The protein operates within amine and polyamine degradation; ethanolamine degradation. Catalyzes the deamination of various vicinal amino-alcohols to oxo compounds. Allows this organism to utilize ethanolamine as the sole source of nitrogen and carbon in the presence of external vitamin B12. In Escherichia coli O7:K1 (strain IAI39 / ExPEC), this protein is Ethanolamine ammonia-lyase small subunit.